The primary structure comprises 897 residues: Alanine--tRNA ligase (897 aa).

4 residues coordinate Zn(2+): H591, H595, C695, and H699.

Belongs to the class-II aminoacyl-tRNA synthetase family. The cofactor is Zn(2+).

The protein localises to the cytoplasm. It carries out the reaction tRNA(Ala) + L-alanine + ATP = L-alanyl-tRNA(Ala) + AMP + diphosphate. Its function is as follows. Catalyzes the attachment of alanine to tRNA(Ala) in a two-step reaction: alanine is first activated by ATP to form Ala-AMP and then transferred to the acceptor end of tRNA(Ala). Also edits incorrectly charged Ser-tRNA(Ala) and Gly-tRNA(Ala) via its editing domain. The sequence is that of Alanine--tRNA ligase from Methanobrevibacter smithii (strain ATCC 35061 / DSM 861 / OCM 144 / PS).